The sequence spans 285 residues: ATP synthase subunit a (285 aa).

6 helical membrane-spanning segments follow: residues 41–61 (TWHV…LWIF), 102–122 (IAPL…MDLI), 164–184 (LGVF…GGFI), 197–217 (VFVQ…ALVS), 226–246 (LFGN…IGFM), and 252–272 (FVWA…FMML).

Belongs to the ATPase A chain family. F-type ATPases have 2 components, CF(1) - the catalytic core - and CF(0) - the membrane proton channel. CF(1) has five subunits: alpha(3), beta(3), gamma(1), delta(1), epsilon(1). CF(0) has three main subunits: a(1), b(2) and c(9-12). The alpha and beta chains form an alternating ring which encloses part of the gamma chain. CF(1) is attached to CF(0) by a central stalk formed by the gamma and epsilon chains, while a peripheral stalk is formed by the delta and b chains.

It is found in the cell inner membrane. Functionally, key component of the proton channel; it plays a direct role in the translocation of protons across the membrane. The protein is ATP synthase subunit a of Pseudoalteromonas translucida (strain TAC 125).